The primary structure comprises 444 residues: Gentisate transporter (444 aa).

The next 12 membrane-spanning stretches (helical) occupy residues 42–64 (AAVL…YGTV), 79–101 (LGTI…GRLS), 108–127 (AAVI…CAFA), 131–153 (WVFG…SVNA), 166–188 (AWAT…LALV), 198–220 (WRFM…MKVI), 252–274 (WISI…LGTW), 289–311 (ALMF…AWAG), 318–340 (RSGV…YPPV), 344–366 (YVIL…AAVA), 378–400 (LGWA…GLLL), and 410–428 (FIMF…SVLL).

Belongs to the major facilitator superfamily. Aromatic acid:H(+) symporter (AAHS) (TC 2.A.1.15) family.

The protein localises to the cell membrane. Transport of gentisate (2,5-dihydroxybenzoate) into the cell. Does not transport 3-hydroxybenzoate or benzoate. This Corynebacterium glutamicum (strain ATCC 13032 / DSM 20300 / JCM 1318 / BCRC 11384 / CCUG 27702 / LMG 3730 / NBRC 12168 / NCIMB 10025 / NRRL B-2784 / 534) protein is Gentisate transporter (genK).